The chain runs to 424 residues: E3 ubiquitin-protein ligase RNF26 (424 aa).

Transmembrane regions (helical) follow at residues 24-44, 60-80, 157-177, 183-203, and 224-244; these read LNFLLVSSLLATLAWLLAFIY, GFLLSLLALVEAVVRFTFGGL, ISTQNFFSLVLALWDAVTGPL, VVAAFLAHISSSAVAMAILLW, and VVFHLTGLVLLACVLAVILIV. An RING-type zinc finger spans residues 371–413; the sequence is CVICQDQSKTVLLLPCRHLCLCQACTEILMRHPVYHRNCPLCR.

As to quaternary structure, interacts with INCA1. Interacts with TMEM43, ENDOD1, TMEM33 and TMED1 to form a complex capable of modulating innate immune signaling through the cGAS-STING pathway. Interacts with UBE2J1; this interaction is important for SQSTM1 ubiquitination.

The protein localises to the endoplasmic reticulum membrane. It catalyses the reaction S-ubiquitinyl-[E2 ubiquitin-conjugating enzyme]-L-cysteine + [acceptor protein]-L-lysine = [E2 ubiquitin-conjugating enzyme]-L-cysteine + N(6)-ubiquitinyl-[acceptor protein]-L-lysine.. The protein operates within protein modification; protein ubiquitination. E3 ubiquitin-protein ligase that plays a key role in endosome organization by retaining vesicles in the perinuclear cloud. Acts as a platform for perinuclear positioning of the endosomal system by mediating ubiquitination of SQSTM1 through interaction with the ubiquitin conjugating enzyme UBE2J1. Ubiquitinated SQSTM1 attracts specific vesicle-associated adapters, forming a molecular bridge that restrains cognate vesicles in the perinuclear region and organizes the endosomal pathway for efficient cargo transport. Also acts as a regulator of type I interferon production in response to viral infection by mediating the formation of 'Lys-11'-linked polyubiquitin chains on TMEM173/STING, leading to stabilize TMEM173/STING. Also required to limit type I interferon response by promoting autophagic degradation of IRF3. The sequence is that of E3 ubiquitin-protein ligase RNF26 from Mus musculus (Mouse).